Reading from the N-terminus, the 187-residue chain is UPF0340 protein SP70585_0722 (187 aa).

The protein belongs to the UPF0340 family.

The chain is UPF0340 protein SP70585_0722 from Streptococcus pneumoniae (strain 70585).